A 144-amino-acid chain; its full sequence is Large ribosomal subunit protein uL15 (144 aa).

The tract at residues 1-50 is disordered; the sequence is MRLNTLSPAAGAKSAKKRVGRGIGSGLGKTGGRGVKGAGSRSGGGVRAGF. Positions 21–50 are enriched in gly residues; that stretch reads RGIGSGLGKTGGRGVKGAGSRSGGGVRAGF.

The protein belongs to the universal ribosomal protein uL15 family. In terms of assembly, part of the 50S ribosomal subunit.

Its function is as follows. Binds to the 23S rRNA. The polypeptide is Large ribosomal subunit protein uL15 (Tolumonas auensis (strain DSM 9187 / NBRC 110442 / TA 4)).